The sequence spans 421 residues: Diaminobutyrate--2-oxoglutarate transaminase (421 aa).

Position 262 is an N6-(pyridoxal phosphate)lysine (Lys-262).

The protein belongs to the class-III pyridoxal-phosphate-dependent aminotransferase family. Requires pyridoxal 5'-phosphate as cofactor.

The catalysed reaction is L-2,4-diaminobutanoate + 2-oxoglutarate = L-aspartate 4-semialdehyde + L-glutamate. It functions in the pathway amine and polyamine biosynthesis; ectoine biosynthesis; L-ectoine from L-aspartate 4-semialdehyde: step 1/3. Its function is as follows. Catalyzes reversively the conversion of L-aspartate beta-semialdehyde (ASA) to L-2,4-diaminobutyrate (DABA) by transamination with L-glutamate. The sequence is that of Diaminobutyrate--2-oxoglutarate transaminase (ectB) from Vibrio parahaemolyticus serotype O3:K6 (strain RIMD 2210633).